We begin with the raw amino-acid sequence, 340 residues long: DNA-directed RNA polymerase subunit alpha (340 aa).

Residues 1–233 are alpha N-terminal domain (alpha-NTD); it reads MIQNEIPIPA…NLFIPLLHEK (233 aa). Residues 263–340 are alpha C-terminal domain (alpha-CTD); that stretch reads RKEISFKHIF…LPKNKFSIND (78 aa).

It belongs to the RNA polymerase alpha chain family. In plastids the minimal PEP RNA polymerase catalytic core is composed of four subunits: alpha, beta, beta', and beta''. When a (nuclear-encoded) sigma factor is associated with the core the holoenzyme is formed, which can initiate transcription.

The protein resides in the plastid. The protein localises to the chloroplast. It catalyses the reaction RNA(n) + a ribonucleoside 5'-triphosphate = RNA(n+1) + diphosphate. Its function is as follows. DNA-dependent RNA polymerase catalyzes the transcription of DNA into RNA using the four ribonucleoside triphosphates as substrates. The protein is DNA-directed RNA polymerase subunit alpha (rpoA) of Anthoceros angustus (Hornwort).